The following is a 303-amino-acid chain: N-acetyl-D-glucosamine kinase (303 aa).

ATP contacts are provided by residues 4-11 (GFDIGGTK) and 133-140 (GVGGGLVL). Zn(2+) contacts are provided by H157, C177, C179, and C184.

Belongs to the ROK (NagC/XylR) family. NagK subfamily.

The catalysed reaction is N-acetyl-D-glucosamine + ATP = N-acetyl-D-glucosamine 6-phosphate + ADP + H(+). Its pathway is cell wall biogenesis; peptidoglycan recycling. Catalyzes the phosphorylation of N-acetyl-D-glucosamine (GlcNAc) derived from cell-wall degradation, yielding GlcNAc-6-P. In Salmonella paratyphi B (strain ATCC BAA-1250 / SPB7), this protein is N-acetyl-D-glucosamine kinase.